A 116-amino-acid chain; its full sequence is MHEITLCQRALELIEQQAAKHGAKRVTGVWLKIGAFSCVETSSLAFCFDLVCRGSVAEGCKLHLEEQEAECWCETCQQYVTLLTQRVRRCPLCHGDMLQIVADDGLQIRRIEIDQE.

Histidine 2 contributes to the Ni(2+) binding site. Zn(2+)-binding residues include cysteine 73, cysteine 76, cysteine 90, and cysteine 93.

It belongs to the HypA/HybF family.

Involved in the maturation of [NiFe] hydrogenases. Required for nickel insertion into the metal center of the hydrogenase. This chain is Hydrogenase maturation factor HypA, found in Escherichia coli O6:H1 (strain CFT073 / ATCC 700928 / UPEC).